The sequence spans 137 residues: Large ribosomal subunit protein bL17 (137 aa).

The protein belongs to the bacterial ribosomal protein bL17 family. Part of the 50S ribosomal subunit. Contacts protein L32.

This Bradyrhizobium sp. (strain ORS 278) protein is Large ribosomal subunit protein bL17.